We begin with the raw amino-acid sequence, 282 residues long: Pantothenate synthetase (282 aa).

M30–H37 contributes to the ATP binding site. The Proton donor role is filled by H37. Residue Q61 coordinates (R)-pantoate. Residue Q61 coordinates beta-alanine. An ATP-binding site is contributed by G147 to D150. Q153 is a binding site for (R)-pantoate. ATP contacts are provided by residues V176 and L184 to R187.

This sequence belongs to the pantothenate synthetase family. Homodimer.

The protein resides in the cytoplasm. The catalysed reaction is (R)-pantoate + beta-alanine + ATP = (R)-pantothenate + AMP + diphosphate + H(+). It functions in the pathway cofactor biosynthesis; (R)-pantothenate biosynthesis; (R)-pantothenate from (R)-pantoate and beta-alanine: step 1/1. Its function is as follows. Catalyzes the condensation of pantoate with beta-alanine in an ATP-dependent reaction via a pantoyl-adenylate intermediate. The polypeptide is Pantothenate synthetase (Bacteroides thetaiotaomicron (strain ATCC 29148 / DSM 2079 / JCM 5827 / CCUG 10774 / NCTC 10582 / VPI-5482 / E50)).